Reading from the N-terminus, the 440-residue chain is F-box protein pof12 (440 aa).

In terms of domain architecture, F-box spans K8–L54.

Interacts with skp1.

The protein resides in the nucleus. In Schizosaccharomyces pombe (strain 972 / ATCC 24843) (Fission yeast), this protein is F-box protein pof12 (pof12).